Here is a 975-residue protein sequence, read N- to C-terminus: MKNRIKKGSSMIGVYGRSDGSSSIQSSNGSESRESIDDNKQGHQSLVEWLNETLPYLNLPWEASEEELRACLVDGTVLCNLLNQLSPGSMRMGGSFEPGCVNIERFLAAMDEMTLPRFEVSDLEQGDMIRVIQSLKALKASFSDDGYDKNTLSARRRWSLPADHSKGVDSNFNDGGSQFIEASEINTSHHSLQNTSTRSLFDMLDRLLDESSQKMNVSHVYVSILRGIVQVVEQRISNQAENLKNQNILFRVREEKYRSRINVLETLASGTTDENEVRRKRCAPNRKGKERSNAELSKLKQELEIVKETHEKQFLELKLNAQKAKVELERQVKNSELRVVEAKELEKLCETKTKRWEKKEQTYKRFINHQTEALQELKATSMSLKHDVLKIGENYFLDLTYYGIKLRGVAHAAKNYQIIIEENRRLYNEVQELKGNIRVYCRIRPFLQGQNKKQTSIEYTGENGELVVANPLKQGKDTYRLFKFNKVFGPESTQEEVFLDTRPMIRSILDGYNVCIFAYGQTGSGKTYTMSGPSITSEEDRGVNYRALNDLFHLTQSRQNSVMYEVGVQMVEIYNEQVRDLLSQDVPDASMHSVRSTEDVLELMNIGLMNRTVGATTLNEKSSRSHSVLSVHVRGVDVKTESVLRGSLHLVDLAGSERVGRSEVTGERLKEAQHINKSLSALGDVIFALAHKNPHVPYRNSKLTQVLQNSLGGQAKTLMFVQINPDEDSYAETVSTLKFAERVSGVELGAARSYKEGRDVRQLMEQVSNLKDMIAKKDEELQKFQNINGIQKRGLSKLRIVSPPRRHSLGGALTNSPRRRQGPGLLGRTTSDIHRHQNESRSSSKFSGGAKDNNIFEDTELLGFEESNNEERLSDISDSCLSMGTETDGSISSGAMELTLFPETSNPPEMFEQSEQNDKAHVGVGPSKPLKHTPKPDISKPSRLSISTTSSKALTSSKRPVTGISSSVKPLNRKR.

The interval M1–K40 is disordered. The span at R17 to S30 shows a compositional bias: low complexity. Positions E31–K40 are enriched in basic and acidic residues. Residues K40–S143 enclose the Calponin-homology (CH) domain. Residues K289–L345 adopt a coiled-coil conformation. The Kinesin motor domain maps to N436–V746. G520–T527 serves as a coordination point for ATP. A coiled-coil region spans residues G757–N788. Disordered stretches follow at residues V801 to D852 and L900 to R975. Low complexity predominate over residues L944 to K958.

This sequence belongs to the TRAFAC class myosin-kinesin ATPase superfamily. Kinesin family. KIN-14 subfamily.

This Arabidopsis thaliana (Mouse-ear cress) protein is Kinesin-like protein KIN-14K.